We begin with the raw amino-acid sequence, 99 residues long: Protein translation factor SUI1 homolog (99 aa).

Belongs to the SUI1 family.

The polypeptide is Protein translation factor SUI1 homolog (Sulfolobus acidocaldarius (strain ATCC 33909 / DSM 639 / JCM 8929 / NBRC 15157 / NCIMB 11770)).